The following is a 392-amino-acid chain: uncharacterized protein (392 aa).

A run of 10 helical transmembrane segments spans residues Trp2–Ile23, Ser38–Gly60, Gly73–Leu95, Phe153–Val175, Val195–Thr217, Val237–Arg259, Arg272–Ala291, Leu297–Ile319, Val331–Ile353, and Phe357–Ile379.

Belongs to the major facilitator superfamily.

Its subcellular location is the cell membrane. This is an uncharacterized protein from Bacillus subtilis (strain 168).